Consider the following 544-residue polypeptide: Chaperonin GroEL (544 aa).

Residues 29-32, 86-90, Gly413, 476-478, and Asp492 contribute to the ATP site; these read TLGP, DGTTT, and NAA.

Belongs to the chaperonin (HSP60) family. Forms a cylinder of 14 subunits composed of two heptameric rings stacked back-to-back. Interacts with the co-chaperonin GroES.

The protein localises to the cytoplasm. It is found in the secreted. It carries out the reaction ATP + H2O + a folded polypeptide = ADP + phosphate + an unfolded polypeptide.. In terms of biological role, together with its co-chaperonin GroES, plays an essential role in assisting protein folding. The GroEL-GroES system forms a nano-cage that allows encapsulation of the non-native substrate proteins and provides a physical environment optimized to promote and accelerate protein folding. The sequence is that of Chaperonin GroEL from Bacillus subtilis (strain 168).